The primary structure comprises 158 residues: Small ribosomal subunit protein uS9 (158 aa).

Residues 1–20 are compositionally biased toward polar residues; it reads MSETMQSLDQLSALKTTQPD. The segment at 1–29 is disordered; it reads MSETMQSLDQLSALKTTQPDAPTYTKKVD.

Belongs to the universal ribosomal protein uS9 family.

In Rhodopseudomonas palustris (strain BisB5), this protein is Small ribosomal subunit protein uS9.